Reading from the N-terminus, the 149-residue chain is MNKGQRHIKIREIITANEIETQDELVDILKKDGYNVTQATVSRDIKELHLVKVPTNNGSYKYSLPADQRFNPLSKLKRSLMDAFVKIDSASHLIVLKTMPGNAQAIGALMDNLDWEEIMGTICGDDTILIICRTHDDTKVVQKKILELL.

The protein belongs to the ArgR family.

It is found in the cytoplasm. The protein operates within amino-acid biosynthesis; L-arginine biosynthesis [regulation]. Its pathway is amino-acid degradation; L-arginine degradation via ADI pathway. In terms of biological role, regulates arginine biosynthesis genes and activates arginine deiminase pathway genes. The polypeptide is Arginine repressor (argR) (Bacillus licheniformis (strain ATCC 14580 / DSM 13 / JCM 2505 / CCUG 7422 / NBRC 12200 / NCIMB 9375 / NCTC 10341 / NRRL NRS-1264 / Gibson 46)).